The primary structure comprises 246 residues: MRIGILTIFPDFVKVIKEYGVIAQAVENNLLQIDIFNLRDFTTDKHKVVDDYAYGGGPGMVMKPEPFFKFFEYYNQMFGKPYVVLTSPQGKTLNNEIAKKLSAQERLLIICGRYEGIDERVMKFVDEEISIGDYVLTGGELPAMVITDVVSRFIPGVVEEESVKNDSFYNDLLDHPHYTRPRNIDGLEVPEVLLSGNHEEIELWRRKESLRKTISKRPDLFLKHQFDEVDKKALLLLFKELIKDAK.

S-adenosyl-L-methionine is bound by residues G112 and 131–136 (IGDYVL).

This sequence belongs to the RNA methyltransferase TrmD family. Homodimer.

The protein resides in the cytoplasm. It carries out the reaction guanosine(37) in tRNA + S-adenosyl-L-methionine = N(1)-methylguanosine(37) in tRNA + S-adenosyl-L-homocysteine + H(+). In terms of biological role, specifically methylates guanosine-37 in various tRNAs. The polypeptide is tRNA (guanine-N(1)-)-methyltransferase (Fervidobacterium nodosum (strain ATCC 35602 / DSM 5306 / Rt17-B1)).